A 115-amino-acid chain; its full sequence is Large ribosomal subunit protein bL35m (115 aa).

This sequence belongs to the bacterial ribosomal protein bL35 family.

It is found in the mitochondrion. This chain is Large ribosomal subunit protein bL35m, found in Saccharomyces cerevisiae (strain YJM789) (Baker's yeast).